Reading from the N-terminus, the 432-residue chain is MTFSEPQKRISSAADVDSFKRSQPYATIISLLDKYSSTVQEHLLPPNEDELAASSKALVTLCRKLSALIDETPPLEGPRRFGNVAVRDWHDKMEAQTTALLTEAFPSINKDSIIELQYYLHGGMGSKQRLDFGTGHELSFMAFVGGLQKLGLLETDLPAPDVLFIFETYFVLVRKLIMTYSLEPAGSHGVWGLDDHSHLPYILGSAQKVSRSVTASTLLVPTKYDKECPPSSVMNPRIVQQQKTTNLYFAAIAFIYDIKSGPFYEHSPILYDISGIATWAKIHSGMIKMYIAEVLGKFPVVQHFYFGSELYPWKDTEGNDLPYSKVEDEEPVKPKLPLGFKSKKEPQTTPHARLPLMGPRGMPMETVERLARRDGQRAAREKEEREDRASGGASGTTGAPGATALPPTRAPGSSVPGGDAPGMAPTKAPWAK.

Residues 322–432 (PYSKVEDEEP…MAPTKAPWAK (111 aa)) form a disordered region. Over residues 366–389 (TVERLARRDGQRAAREKEEREDRA) the composition is skewed to basic and acidic residues. Residues 396–412 (TTGAPGATALPPTRAPG) show a composition bias toward low complexity.

Belongs to the PTPA-type PPIase family.

It is found in the cytoplasm. It localises to the nucleus. It carries out the reaction [protein]-peptidylproline (omega=180) = [protein]-peptidylproline (omega=0). Functionally, PPIases accelerate the folding of proteins. It catalyzes the cis-trans isomerization of proline imidic peptide bonds in oligopeptides. Acts as a regulatory subunit for PP2A-like phosphatases modulating their activity or substrate specificity, probably by inducing a conformational change in the catalytic subunit, a direct target of the PPIase. Can reactivate inactive phosphatase PP2A-phosphatase methylesterase complexes (PP2Ai) in presence of ATP and Mg(2+) by dissociating the inactive form from the complex. In Yarrowia lipolytica (strain CLIB 122 / E 150) (Yeast), this protein is Serine/threonine-protein phosphatase 2A activator 1 (RRD1).